The sequence spans 461 residues: B3 domain-containing protein REM9 (461 aa).

A DNA-binding region (TF-B3 1) is located at residues 11–103; that stretch reads NQHFFQPLLP…VFHVTALGPS (93 aa). Positions 110–146 are disordered; sequence PQSSRHEEGEESGENEISEKEGEENVQKESDKSSSDL. The segment covering 126-143 has biased composition (basic and acidic residues); sequence ISEKEGEENVQKESDKSS. 2 DNA-binding regions (TF-B3) span residues 148-244 and 230-332; these read CFSQ…CSRT and LQKA…EQPS. Residues 333-415 form a disordered region; the sequence is FKAEDGRHKR…SGIEGNLQHT (83 aa). Residues 384–394 are compositionally biased toward basic and acidic residues; sequence PKVEIREKIAE. A compositionally biased stretch (polar residues) spans 400-415; the sequence is RASNKSSGIEGNLQHT.

Its subcellular location is the nucleus. This Arabidopsis thaliana (Mouse-ear cress) protein is B3 domain-containing protein REM9 (REM9).